The following is an 88-amino-acid chain: uncharacterized protein (88 aa).

This is an uncharacterized protein from Treponema pallidum (strain Nichols).